Reading from the N-terminus, the 390-residue chain is Aspergillopepsin-1 (390 aa).

Residues 1 to 19 (MVNTSLLAALTAYAVAVSA) form the signal peptide. A propeptide spans 20–67 (APTAPQVKGFSVNQVAVPKGVYRHPAAQLAKAYGKYHATVPTQVAAAA) (activation peptide). A glycan (O-linked (Man...) threonine) is linked at T70. Residues 84 to 387 (YITQVTVGDD…DASGPRLGFA (304 aa)) form the Peptidase A1 domain. Residues D100 and D281 contribute to the active site.

Belongs to the peptidase A1 family.

The protein resides in the secreted. The catalysed reaction is Hydrolysis of proteins with broad specificity. Generally favors hydrophobic residues in P1 and P1', but also accepts Lys in P1, which leads to activation of trypsinogen. Does not clot milk.. Inhibited by the microbial peptide pepstatin. Its function is as follows. Secreted aspartic endopeptidase that allows assimilation of proteinaceous substrates. The scissile peptide bond is attacked by a nucleophilic water molecule activated by two aspartic residues in the active site. Shows a broad primary substrate specificity. Favors hydrophobic residues at the P1 and P1' positions, but also accepts a lysine residue in the P1 position, leading to the activation of trypsinogen and chymotrypsinogen A. In Aspergillus oryzae (Yellow koji mold), this protein is Aspergillopepsin-1 (pepA).